A 104-amino-acid chain; its full sequence is Large ribosomal subunit protein uL24 (104 aa).

This sequence belongs to the universal ribosomal protein uL24 family. Part of the 50S ribosomal subunit.

Its function is as follows. One of two assembly initiator proteins, it binds directly to the 5'-end of the 23S rRNA, where it nucleates assembly of the 50S subunit. One of the proteins that surrounds the polypeptide exit tunnel on the outside of the subunit. The polypeptide is Large ribosomal subunit protein uL24 (Cronobacter sakazakii (strain ATCC BAA-894) (Enterobacter sakazakii)).